A 346-amino-acid chain; its full sequence is High mobility group protein 20A (346 aa).

Polar residues-rich tracts occupy residues Met-1–Leu-10 and Ser-55–Ser-65. Disordered stretches follow at residues Met-1 to Phe-112 and Phe-178 to Lys-210. Over residues Asn-71 to Ser-81 the composition is skewed to basic and acidic residues. The span at Lys-82–Pro-95 shows a compositional bias: basic residues. The segment at residues Pro-102–Gln-170 is a DNA-binding region (HMG box). Ser-104 bears the Phosphoserine mark. Residues Lys-181–Lys-210 are compositionally biased toward basic and acidic residues. The stretch at Ser-228 to Gln-272 forms a coiled coil.

As to quaternary structure, interacts with DTNB. In terms of tissue distribution, expressed in brain. Detected in mature neurons.

The protein localises to the nucleus. Its function is as follows. Plays a role in neuronal differentiation as chromatin-associated protein. Acts as inhibitor of HMG20B. Overcomes the repressive effects of the neuronal silencer REST and induces the activation of neuronal-specific genes. Involved in the recruitment of the histone methyltransferase KMT2A/MLL1 and consequent increased methylation of histone H3 lysine 4. The sequence is that of High mobility group protein 20A (Hmg20a) from Mus musculus (Mouse).